A 387-amino-acid polypeptide reads, in one-letter code: UDP-N-acetylglucosamine--N-acetylmuramyl-(pentapeptide) pyrophosphoryl-undecaprenol N-acetylglucosamine transferase (387 aa).

Residues 1–22 (MSEHVRSAGPPQASTAPSGGSA) form a disordered region. UDP-N-acetyl-alpha-D-glucosamine-binding positions include 41–43 (TGG), Asn158, Arg194, Ser222, Ile276, and Gln321.

The protein belongs to the glycosyltransferase 28 family. MurG subfamily.

The protein localises to the cell inner membrane. The catalysed reaction is di-trans,octa-cis-undecaprenyl diphospho-N-acetyl-alpha-D-muramoyl-L-alanyl-D-glutamyl-meso-2,6-diaminopimeloyl-D-alanyl-D-alanine + UDP-N-acetyl-alpha-D-glucosamine = di-trans,octa-cis-undecaprenyl diphospho-[N-acetyl-alpha-D-glucosaminyl-(1-&gt;4)]-N-acetyl-alpha-D-muramoyl-L-alanyl-D-glutamyl-meso-2,6-diaminopimeloyl-D-alanyl-D-alanine + UDP + H(+). It functions in the pathway cell wall biogenesis; peptidoglycan biosynthesis. Functionally, cell wall formation. Catalyzes the transfer of a GlcNAc subunit on undecaprenyl-pyrophosphoryl-MurNAc-pentapeptide (lipid intermediate I) to form undecaprenyl-pyrophosphoryl-MurNAc-(pentapeptide)GlcNAc (lipid intermediate II). In Polaromonas sp. (strain JS666 / ATCC BAA-500), this protein is UDP-N-acetylglucosamine--N-acetylmuramyl-(pentapeptide) pyrophosphoryl-undecaprenol N-acetylglucosamine transferase.